A 239-amino-acid chain; its full sequence is IkB-like protein (239 aa).

4 ANK repeats span residues 48–77 (NKITVFMLICIYGRLDFLRFLFKQESYPGE), 87–116 (DGNSAWHYLAEKNNHLLLEEVLDYFGKNGI), 124–153 (NGVTPIMKAAMRGRTLSVLSLLKYGANPNR), and 158–187 (KGFTTWDWAVFTGHADLVKTLNKGYQKPLF). Positions 81-87 (HYRRDKD) match the Nuclear localization signal motif. The short motif at 203–214 (KKKPKIIITGCE) is the Nuclear localization signal element. The PxIxITxC motif; Interaction with host PPP3CA motif lies at 206 to 213 (PKIIITGC). The short motif at 228–231 (FLCV) is the FLCV motif element.

The protein belongs to the asfivirus A238L family. As to quaternary structure, interacts with host PPIA. Interacts with host PPP3CA/Calcineurin. Interacts with host RELA/p65; interaction of the 32 kDa form with host RELA results in the formation of a stable complex with NF-kappa-B. Interacts with host PPP3R1. Interacts with host EP300; this interaction inhibits the association of host EP300 with host RELA, JUN and NFATC2. In terms of processing, the protein exists in a 28 kDa and a 32 kDa form, probably due to post-translational modifications which are neither phosphorylation, nor sumoylation.

The protein localises to the host nucleus. It localises to the host cytoplasm. In terms of biological role, ikB-like protein that inhibits the binding of NF-kappa-B to DNA, thereby downregulating pro-inflammatory cytokine production. Forms a heterodimer with the NF-kappa-B subunit RELA/p65 and prevents the activation of the NF-kappa-B transcription factor. Inhibits calcineurin function, which is required for the induction of nuclear factor of activated T cells (NFAT)-dependent immune response genes. Prevents the binding of substrates to calcineurin without affecting the phosphatase activity. Does not contain the serine residues that are phosphorylated by host IkB kinase and thus is not degraded following stimulation of the NFkB pathway. The protein is IkB-like protein (A238L) of Ornithodoros (relapsing fever ticks).